A 512-amino-acid polypeptide reads, in one-letter code: D-alanine--D-alanyl carrier protein ligase (512 aa).

152 to 153 (TS) lines the ATP pocket. Aspartate 199 contacts D-alanine. 294 to 299 (NAYGPT) contacts ATP. Valine 303 is a D-alanine binding site. Residues aspartate 385, 397–400 (YGGR), and lysine 499 each bind ATP. Lysine 499 contacts D-alanine.

Belongs to the ATP-dependent AMP-binding enzyme family. DltA subfamily.

Its subcellular location is the cytoplasm. It catalyses the reaction holo-[D-alanyl-carrier protein] + D-alanine + ATP = D-alanyl-[D-alanyl-carrier protein] + AMP + diphosphate. The protein operates within cell wall biogenesis; lipoteichoic acid biosynthesis. Catalyzes the first step in the D-alanylation of lipoteichoic acid (LTA), the activation of D-alanine and its transfer onto the D-alanyl carrier protein (Dcp) DltC. In an ATP-dependent two-step reaction, forms a high energy D-alanyl-AMP intermediate, followed by transfer of the D-alanyl residue as a thiol ester to the phosphopantheinyl prosthetic group of the Dcp. D-alanylation of LTA plays an important role in modulating the properties of the cell wall in Gram-positive bacteria, influencing the net charge of the cell wall. The chain is D-alanine--D-alanyl carrier protein ligase from Streptococcus pyogenes serotype M18 (strain MGAS8232).